The chain runs to 176 residues: MKIIAKKDLFINDEIRVREVRLVGLEGEQLGIKPLSEAQSLADASNVDLVLIQPQAVPPVAKLMDYGKFKFEYQKKQKEQRKKQSVVTVKEVRLSPVIDKGDFETKLRNGRKFLEKGNKVKVSIRFKGRMITHKEIGAKVLADFAEATQDIAIIEQRAKMDGRQMFMQLAPISDNK.

Belongs to the IF-3 family. As to quaternary structure, monomer.

It is found in the cytoplasm. Functionally, IF-3 binds to the 30S ribosomal subunit and shifts the equilibrium between 70S ribosomes and their 50S and 30S subunits in favor of the free subunits, thus enhancing the availability of 30S subunits on which protein synthesis initiation begins. This chain is Translation initiation factor IF-3, found in Streptococcus pyogenes serotype M4 (strain MGAS10750).